The sequence spans 250 residues: MNTRASNFLAASFSTIMLVGAFSLPAFAQENQMTTQPARIAVTGEGMMTASPDMAILNLSVLRQAKTAREAMTANNEAMTKVLDAMKKAGIEDRDLQTGGIDIQPIYVYPDDKNNLKEPTITGYSVSTSLTVRVRELANVGKILDESVTLGVNQGGDLNLVNDNPSAVINEARKRAVANAIAKAKTLADAAGVGLGRVVEISELSRPPMPMPIARGQFRTMLAAAPDNSVPIAAGENSYNVSVNVVFEIK.

A signal peptide spans M1–A28.

It is found in the periplasm. In Brucella abortus (strain S19), this protein is 26 kDa periplasmic immunogenic protein (bp26).